The chain runs to 222 residues: UPF0502 protein Shewmr4_1554 (222 aa).

Residues 175 to 193 (SLSADSPSAGSNSLNAQDR) are compositionally biased toward polar residues. The disordered stretch occupies residues 175–194 (SLSADSPSAGSNSLNAQDRQ).

This sequence belongs to the UPF0502 family.

The protein is UPF0502 protein Shewmr4_1554 of Shewanella sp. (strain MR-4).